Reading from the N-terminus, the 1631-residue chain is Ras GTPase-activating-like protein IQGAP3 (1631 aa).

Residues 34–149 enclose the Calponin-homology (CH) domain; sequence LCRLEEAKRW…YCIHALSLFL (116 aa). Tyr162 is modified (phosphotyrosine). Ser539 bears the Phosphoserine mark. 4 IQ domains span residues 730–759, 760–789, 790–819, and 820–849; these read NVGF…FLRT, WLPA…YFKA, NLDA…YFQK, and NVNS…APHP. The region spanning 1004–1253 is the Ras-GAP domain; that stretch reads YLLLQLFKTA…LKFRKFIHRA (250 aa). Ser1424 bears the Phosphoserine mark.

The sequence is that of Ras GTPase-activating-like protein IQGAP3 (IQGAP3) from Homo sapiens (Human).